We begin with the raw amino-acid sequence, 218 residues long: UPF0126 membrane protein SCO4104 (218 aa).

Helical transmembrane passes span 8–28 (LLAL…LTAV), 37–57 (GVVV…DVLI), 64–84 (AFLD…AFAV), 91–111 (LEPA…VIGA), 118–138 (GLAV…GGTI), 154–174 (LYAI…ETGV), and 179–199 (AALG…HFGI).

Belongs to the UPF0126 family.

The protein resides in the cell membrane. The polypeptide is UPF0126 membrane protein SCO4104 (Streptomyces coelicolor (strain ATCC BAA-471 / A3(2) / M145)).